We begin with the raw amino-acid sequence, 108 residues long: MERWDPLTWHCIISSYYFYIFWNFFLPMFIVYRGFGLLDPFAVKGRYTSDCYIFLLSEEPFENVTHCSSQRQSWALWSSHQRISRLQRLTTEHHKANRGQATIRKTLA.

A helical membrane pass occupies residues 15 to 37; the sequence is SYYFYIFWNFFLPMFIVYRGFGL.

It is found in the membrane. This is an uncharacterized protein from Archaeoglobus fulgidus (strain ATCC 49558 / DSM 4304 / JCM 9628 / NBRC 100126 / VC-16).